A 470-amino-acid polypeptide reads, in one-letter code: Cytochrome P450 monooxygenase sirC (470 aa).

The chain crosses the membrane as a helical span at residues 12 to 34 (LRGMVVGTIMLLCYRYGLALSIL). N-linked (GlcNAc...) asparagine glycosylation is present at N399. C410 is a heme binding site.

It belongs to the cytochrome P450 family. The cofactor is heme.

It localises to the membrane. Its pathway is mycotoxin biosynthesis. In terms of biological role, cytochrome P450 monooxygenase; part of the gene cluster that mediates the biosynthesis of sirodesmin PL, an epipolythiodioxopiperazine (ETP) characterized by a disulfide bridged cyclic dipeptide and that acts as a phytotoxin which is involved in the blackleg didease of canola. SirD catalyzes the O-prenylation of L-tyrosine (L-Tyr) in the presence of dimethylallyl diphosphate (DMAPP) to yield 4-O-dimethylallyl-L-Tyr, and therefore represents probably the first pathway-specific enzyme in the biosynthesis of sirodesmin PL. 4-O-dimethylallyl-L-Tyr, then undergoes condensation with L-Ser in a reaction catalyzed by the non-ribosomal peptide synthase sirP to form the diketopiperazine (DKP) backbone. Further bishydroxylation of the DKP performed by the cytochrome P450 monooxygenase sirC leads to the production of the intermediate phomamide. This step is essential to form the reactive thiol group required for toxicity of sirodesmin PL. The next steps of sirodesmin biosynthesis are not well understood yet, but some predictions could be made from intermediate compounds identification. Phomamide is converted into phomalizarine via oxidation, probably by sirT. Further oxidation, methylation (by sirM or sirN) and reduction steps convert phomalizarine to deacetyl sirodesmin. Finally, acetyltransferase sirH probably acetylates deacetyl sirodesmin to produce sirodesmin PL. The polypeptide is Cytochrome P450 monooxygenase sirC (Leptosphaeria maculans (Blackleg fungus)).